The following is a 320-amino-acid chain: Lipoyl synthase (320 aa).

The [4Fe-4S] cluster site is built by Cys-66, Cys-71, Cys-77, Cys-92, Cys-96, Cys-99, and Ser-306. In terms of domain architecture, Radical SAM core spans 77 to 295 (CFGHGTATFM…AEIGYAMGFS (219 aa)).

This sequence belongs to the radical SAM superfamily. Lipoyl synthase family. [4Fe-4S] cluster is required as a cofactor.

Its subcellular location is the cytoplasm. The catalysed reaction is [[Fe-S] cluster scaffold protein carrying a second [4Fe-4S](2+) cluster] + N(6)-octanoyl-L-lysyl-[protein] + 2 oxidized [2Fe-2S]-[ferredoxin] + 2 S-adenosyl-L-methionine + 4 H(+) = [[Fe-S] cluster scaffold protein] + N(6)-[(R)-dihydrolipoyl]-L-lysyl-[protein] + 4 Fe(3+) + 2 hydrogen sulfide + 2 5'-deoxyadenosine + 2 L-methionine + 2 reduced [2Fe-2S]-[ferredoxin]. The protein operates within protein modification; protein lipoylation via endogenous pathway; protein N(6)-(lipoyl)lysine from octanoyl-[acyl-carrier-protein]: step 2/2. In terms of biological role, catalyzes the radical-mediated insertion of two sulfur atoms into the C-6 and C-8 positions of the octanoyl moiety bound to the lipoyl domains of lipoate-dependent enzymes, thereby converting the octanoylated domains into lipoylated derivatives. The chain is Lipoyl synthase from Thioalkalivibrio sulfidiphilus (strain HL-EbGR7).